A 344-amino-acid chain; its full sequence is MSEAIRLTQYSHGAGCGCKISPKVLEVILAGSGAQNLDPKLWVGNASRDDAAVYALDEERGVVSTTDFFMPIVDDPFDFGRIAATNAISDIYAMGGDPLMAIAILGWPVNVLAAEVAREVIAGGRKVCEEAGIPLAGGHSIDAPEPIFGLAVTGVVEKRFMKRNDTAEAGCRLYLTKPLGIGILTTAEKKARLRAEDVGVARDWMCTLNRPGARFGRLAGVKAMTDVTGFGLLGHLVEMADGSKLTARVEYAAVPRLASAEYYLEQGCVPGGTLRNFDSYGERIAPLPEVQKLLLCDPQTSGGLLVAVAPEGEAEFLAVAAELGLQLAPIGELVERQSLAVQVL.

The active site involves cysteine 16. ATP-binding positions include lysine 19 and serine 47 to aspartate 49. Aspartate 50 is a Mg(2+) binding site. Residues aspartate 67, aspartate 90, and glycine 138–serine 140 each bind ATP. Position 90 (aspartate 90) interacts with Mg(2+). Aspartate 226 contributes to the Mg(2+) binding site.

The protein belongs to the selenophosphate synthase 1 family. Class I subfamily. Homodimer. The cofactor is Mg(2+).

It catalyses the reaction hydrogenselenide + ATP + H2O = selenophosphate + AMP + phosphate + 2 H(+). Functionally, synthesizes selenophosphate from selenide and ATP. This is Selenide, water dikinase from Pseudomonas aeruginosa (strain ATCC 15692 / DSM 22644 / CIP 104116 / JCM 14847 / LMG 12228 / 1C / PRS 101 / PAO1).